A 237-amino-acid chain; its full sequence is Class B acid phosphatase (237 aa).

An N-terminal signal peptide occupies residues 1–23 (MKKITLALSAVCLLFTLNHSANA). Aspartate 69 serves as the catalytic Nucleophile. Mg(2+) contacts are provided by aspartate 69 and aspartate 71. The active-site Proton donor is the aspartate 71. Substrate is bound by residues 137 to 138 (TG) and lysine 177. Aspartate 192 provides a ligand contact to Mg(2+).

The protein belongs to the class B bacterial acid phosphatase family. Homotetramer. Requires Mg(2+) as cofactor.

Its subcellular location is the periplasm. The catalysed reaction is a phosphate monoester + H2O = an alcohol + phosphate. Dephosphorylates several organic phosphate monoesters including monophosphate nucleotides (NMPs), coenzyme A (CoA), nicotinamide adenine dinucleotide phosphate (NADP), flavin mononucleotide (FMN) and phosphorylated 5-6 carbon sugars in vitro. Also has a phosphotransferase activity catalyzing the transfer of low-energy phosphate groups from organic phosphate monoesters to free hydroxyl groups of various organic compounds. This chain is Class B acid phosphatase (aphA), found in Salmonella typhi.